We begin with the raw amino-acid sequence, 270 residues long: Neurotrophic factor BDNF precursor form (270 aa).

Positions M1 to A18 are cleaved as a signal peptide. Residues A19–R151 constitute a propeptide that is removed on maturation. Residue N144 is glycosylated (N-linked (GlcNAc...) asparagine). 3 cysteine pairs are disulfide-bonded: C164–C231, C209–C260, and C219–C262.

It belongs to the NGF-beta family.

It is found in the secreted. Promotes the survival of neuronal populations that are all located either in the central nervous system or directly connected to it. This Cyprinus carpio (Common carp) protein is Neurotrophic factor BDNF precursor form (bdnf).